A 186-amino-acid chain; its full sequence is Phosphoheptose isomerase (186 aa).

The SIS domain occupies 33–186 (LCECLKKGGK…TLCQIIDEGF (154 aa)). 48–50 (NGG) contacts substrate. Histidine 57 and glutamate 61 together coordinate Zn(2+). Residues glutamate 61, 90–91 (ND), 116–118 (STS), serine 121, and glutamine 168 each bind substrate. 2 residues coordinate Zn(2+): glutamine 168 and histidine 176.

Belongs to the SIS family. GmhA subfamily. In terms of assembly, homotetramer. Requires Zn(2+) as cofactor.

The protein localises to the cytoplasm. It carries out the reaction 2 D-sedoheptulose 7-phosphate = D-glycero-alpha-D-manno-heptose 7-phosphate + D-glycero-beta-D-manno-heptose 7-phosphate. It participates in carbohydrate biosynthesis; D-glycero-D-manno-heptose 7-phosphate biosynthesis; D-glycero-alpha-D-manno-heptose 7-phosphate and D-glycero-beta-D-manno-heptose 7-phosphate from sedoheptulose 7-phosphate: step 1/1. Its function is as follows. Catalyzes the isomerization of sedoheptulose 7-phosphate in D-glycero-D-manno-heptose 7-phosphate. This Campylobacter jejuni subsp. jejuni serotype O:6 (strain 81116 / NCTC 11828) protein is Phosphoheptose isomerase.